The following is a 357-amino-acid chain: Inositol-tetrakisphosphate 1-kinase 3 (357 aa).

Residues K56 and K98 each coordinate 1D-myo-inositol 1,3,4-trisphosphate. The ATP site is built by R133 and K183. H190 and K222 together coordinate 1D-myo-inositol 1,3,4-trisphosphate. Residues 211–222 (QEFVNHGGVLFK), S237, and S262 each bind ATP. Mg(2+)-binding residues include D302, D317, and N319. N319 is a 1D-myo-inositol 1,3,4-trisphosphate binding site.

It belongs to the ITPK1 family. As to quaternary structure, monomer. Mg(2+) serves as cofactor. As to expression, expressed in roots, leaves, flowers, anthers and embryos.

The enzyme catalyses 1D-myo-inositol 3,4,5,6-tetrakisphosphate + ATP = 1D-myo-inositol 1,3,4,5,6-pentakisphosphate + ADP + H(+). The catalysed reaction is 1D-myo-inositol 1,3,4-trisphosphate + ATP = 1D-myo-inositol 1,3,4,5-tetrakisphosphate + ADP + H(+). It carries out the reaction 1D-myo-inositol 1,3,4-trisphosphate + ATP = 1D-myo-inositol 1,3,4,6-tetrakisphosphate + ADP + H(+). In terms of biological role, kinase that can phosphorylate various inositol polyphosphate such as Ins(3,4,5,6)P4 or Ins(1,3,4)P3 and participates in phytic acid biosynthesis in developing seeds. Phytic acid is the primary storage form of phosphorus in cereal grains and other plant seeds. The sequence is that of Inositol-tetrakisphosphate 1-kinase 3 from Oryza sativa subsp. japonica (Rice).